The sequence spans 158 residues: MELLTNFPLLSSLAAIIFAQVIKVPIQFIVSRKLDWSLVTSTGGMPSSHSAAVTALSTGVALEHGLDSSLFAVSAIFAVITMFDATGVRRHAGEQATVINKLVIDFNRFVNEAKDFPKAAEKEKQKKLKELLGHQPIEVFFGGLTGILLTLVLAYFFM.

2 helical membrane-spanning segments follow: residues 10–30 (LSSL…QFIV) and 137–157 (IEVF…AYFF).

It is found in the cell membrane. This is an uncharacterized protein from Bacillus subtilis (strain 168).